A 300-amino-acid polypeptide reads, in one-letter code: Inosose dehydratase (300 aa).

The protein belongs to the IolE/MocC family. It depends on glutathione as a cofactor. The cofactor is Co(2+). Mn(2+) is required as a cofactor.

The enzyme catalyses scyllo-inosose = 3D-3,5/4-trihydroxycyclohexane-1,2-dione + H2O. It participates in polyol metabolism; myo-inositol degradation into acetyl-CoA; acetyl-CoA from myo-inositol: step 2/7. Its function is as follows. Catalyzes the dehydration of inosose (2-keto-myo-inositol, 2KMI or 2,4,6/3,5-pentahydroxycyclohexanone) to 3D-(3,5/4)-trihydroxycyclohexane-1,2-dione (D-2,3-diketo-4-deoxy-epi-inositol). The polypeptide is Inosose dehydratase (Bacillus licheniformis (strain ATCC 14580 / DSM 13 / JCM 2505 / CCUG 7422 / NBRC 12200 / NCIMB 9375 / NCTC 10341 / NRRL NRS-1264 / Gibson 46)).